We begin with the raw amino-acid sequence, 525 residues long: MTENIHKHRILILDFGSQYTQLVARRVRELGVYCELWAWDVTEAQIRDFNPSGIILSGGPESTTEENSPRAPQYVFEAGVPIFGVCYGMQTMAMQLGGHVEASNEREFGYAQVEVVNDSALVRGIEDALTADGKPLLDVWMSHGDKVTAIPSDFVTVASTESCPFAIMANEEKRFYGVQFHPEVTHTRQGMRMLERFVRDICQCEALWTPAKIIDDAVARIREQVGDDKVILGLSGGVDSSVTAMLLHRAIGKNLTCVFVDNGLLRLNEAEQVLDMFGDHFGLNIVHVPAEDRFLSALAGENDPEAKRKIIGRVFVEVFDEEALKLEDVKWLAQGTIYPDVIESAASATGKAHVIKSHHNVGGLPKEMKMGLVEPLKELFKDEVREIGLELGLPYDMLYRHPFPGPGLGVRVLGEVKKEYCDLLRRADAIFIEELRKADLYDKVSQAFTVFLPVRSVGVMGDGRKYDWVVSLRAVETIDFMTAHWAHLPYDFLGRVSNRIINEVNGISRVVYDISGKPPATIEWE.

The Glutamine amidotransferase type-1 domain maps to 9 to 207; it reads RILILDFGSQ…VRDICQCEAL (199 aa). The Nucleophile role is filled by cysteine 86. Active-site residues include histidine 181 and glutamate 183. In terms of domain architecture, GMPS ATP-PPase spans 208–400; the sequence is WTPAKIIDDA…LGLPYDMLYR (193 aa). 235–241 contributes to the ATP binding site; the sequence is SGGVDSS.

As to quaternary structure, homodimer.

The catalysed reaction is XMP + L-glutamine + ATP + H2O = GMP + L-glutamate + AMP + diphosphate + 2 H(+). The protein operates within purine metabolism; GMP biosynthesis; GMP from XMP (L-Gln route): step 1/1. In terms of biological role, catalyzes the synthesis of GMP from XMP. This chain is GMP synthase [glutamine-hydrolyzing], found in Shigella flexneri serotype 5b (strain 8401).